A 285-amino-acid polypeptide reads, in one-letter code: Seed agglutinin 2 (285 aa).

An N-terminal signal peptide occupies residues 1–31 (MASYKFKTQNSFLLLLSISFFFLLLLNKVNS). A glycan (N-linked (GlcNAc...) asparagine) is linked at asparagine 147. Positions 156 and 158 each coordinate Mn(2+). 3 residues coordinate Ca(2+): aspartate 158, asparagine 162, and aspartate 166. The Mn(2+) site is built by aspartate 166 and histidine 171.

Belongs to the leguminous lectin family. In terms of assembly, homotetramer. Post-translationally, mostly found in non-glycosylated form. Expressed in seed.

Its function is as follows. Seed lectin. This chain is Seed agglutinin 2, found in Robinia pseudoacacia (Black locust).